The primary structure comprises 392 residues: Formate-dependent phosphoribosylglycinamide formyltransferase (392 aa).

N(1)-(5-phospho-beta-D-ribosyl)glycinamide is bound by residues E22–L23 and E82. Residues R114, K155, S160–Q165, E195–V198, and E203 contribute to the ATP site. Residues R119–L308 form the ATP-grasp domain. E267 and E279 together coordinate Mg(2+). N(1)-(5-phospho-beta-D-ribosyl)glycinamide is bound by residues D286, K355, and R362–R363.

It belongs to the PurK/PurT family. Homodimer.

The enzyme catalyses N(1)-(5-phospho-beta-D-ribosyl)glycinamide + formate + ATP = N(2)-formyl-N(1)-(5-phospho-beta-D-ribosyl)glycinamide + ADP + phosphate + H(+). It functions in the pathway purine metabolism; IMP biosynthesis via de novo pathway; N(2)-formyl-N(1)-(5-phospho-D-ribosyl)glycinamide from N(1)-(5-phospho-D-ribosyl)glycinamide (formate route): step 1/1. Its function is as follows. Involved in the de novo purine biosynthesis. Catalyzes the transfer of formate to 5-phospho-ribosyl-glycinamide (GAR), producing 5-phospho-ribosyl-N-formylglycinamide (FGAR). Formate is provided by PurU via hydrolysis of 10-formyl-tetrahydrofolate. In Salmonella dublin (strain CT_02021853), this protein is Formate-dependent phosphoribosylglycinamide formyltransferase.